A 156-amino-acid chain; its full sequence is ATP synthase subunit b (156 aa).

A helical transmembrane segment spans residues Ala-11–Ala-31.

This sequence belongs to the ATPase B chain family. In terms of assembly, F-type ATPases have 2 components, F(1) - the catalytic core - and F(0) - the membrane proton channel. F(1) has five subunits: alpha(3), beta(3), gamma(1), delta(1), epsilon(1). F(0) has three main subunits: a(1), b(2) and c(10-14). The alpha and beta chains form an alternating ring which encloses part of the gamma chain. F(1) is attached to F(0) by a central stalk formed by the gamma and epsilon chains, while a peripheral stalk is formed by the delta and b chains.

Its subcellular location is the cell inner membrane. F(1)F(0) ATP synthase produces ATP from ADP in the presence of a proton or sodium gradient. F-type ATPases consist of two structural domains, F(1) containing the extramembraneous catalytic core and F(0) containing the membrane proton channel, linked together by a central stalk and a peripheral stalk. During catalysis, ATP synthesis in the catalytic domain of F(1) is coupled via a rotary mechanism of the central stalk subunits to proton translocation. Its function is as follows. Component of the F(0) channel, it forms part of the peripheral stalk, linking F(1) to F(0). This is ATP synthase subunit b from Aeromonas hydrophila subsp. hydrophila (strain ATCC 7966 / DSM 30187 / BCRC 13018 / CCUG 14551 / JCM 1027 / KCTC 2358 / NCIMB 9240 / NCTC 8049).